Consider the following 26-residue polypeptide: uncharacterized protein (26 aa).

This is an uncharacterized protein from Saccharomyces cerevisiae (strain ATCC 204508 / S288c) (Baker's yeast).